The primary structure comprises 313 residues: FAM172 family protein homolog Y75B8A.31 (313 aa).

The disordered stretch occupies residues 293-313 (VKSENSKESDDEAPKSKKICV). Positions 296–307 (ENSKESDDEAPK) are enriched in basic and acidic residues.

Belongs to the FAM172 family.

This is FAM172 family protein homolog Y75B8A.31 from Caenorhabditis elegans.